Reading from the N-terminus, the 280-residue chain is Dehydrogenase/reductase SDR family member 2, mitochondrial (280 aa).

The transit peptide at 1-23 (MLSAVARGYQGWFHPCARLSVRM) directs the protein to the mitochondrion. The NAD(+) site is built by serine 46 and isoleucine 48. Lysine 96 is modified (N6-acetyllysine; alternate). Lysine 96 is subject to N6-succinyllysine; alternate. Serine 172 is a binding site for substrate. The NAD(+) site is built by tyrosine 185 and lysine 189. Tyrosine 185 acts as the Proton acceptor in catalysis. Lysine 219 is modified (N6-acetyllysine; alternate). N6-succinyllysine; alternate is present on lysine 219. Threonine 220 is an NAD(+) binding site. Residue serine 223 is modified to Phosphoserine. Lysine 237 is subject to N6-succinyllysine.

This sequence belongs to the short-chain dehydrogenases/reductases (SDR) family. In terms of assembly, directly interacts with MDM2; this interaction occurs in the nucleus and does not target DHRS2 to degradation. In terms of tissue distribution, widely expressed, with highest levels in liver and kidney, followed by heart, spleen, skeletal muscle and placenta. In hemopoietic cells, expressed in dendritic cells, but not in monocytes, macrophages, granulocytes, nor in B and T lymphocytes.

It is found in the mitochondrion matrix. Its subcellular location is the nucleus. Functionally, NADPH-dependent oxidoreductase which catalyzes the reduction of dicarbonyl compounds. Displays reductase activity in vitro with 3,4-hexanedione, 2,3-heptanedione and 1-phenyl-1,2-propanedione as substrates. May function as a dicarbonyl reductase in the enzymatic inactivation of reactive carbonyls involved in covalent modification of cellular components. Also displays a minor hydroxysteroid dehydrogenase activity toward bile acids such as ursodeoxycholic acid (UDCA) and isoursodeoxycholic acid (isoUDCA), which makes it unlikely to control hormone levels. Doesn't show any activity in vitro with retinoids and sugars as substrates. Attenuates MDM2-mediated p53/TP53 degradation, leading to p53/TP53 stabilization and increased transcription activity, resulting in the accumulation of MDM2 and CDKN1A/p21. Reduces proliferation, migration and invasion of cancer cells and well as the production of ROS in cancer. This is Dehydrogenase/reductase SDR family member 2, mitochondrial from Homo sapiens (Human).